The following is a 291-amino-acid chain: Lipoyl synthase (291 aa).

The [4Fe-4S] cluster site is built by Cys-35, Cys-40, Cys-46, Cys-61, Cys-65, Cys-68, and Ser-273. Positions 47 to 262 constitute a Radical SAM core domain; that stretch reads FGKRQATFLI…KERALTMGFE (216 aa).

It belongs to the radical SAM superfamily. Lipoyl synthase family. It depends on [4Fe-4S] cluster as a cofactor.

Its subcellular location is the cytoplasm. The catalysed reaction is [[Fe-S] cluster scaffold protein carrying a second [4Fe-4S](2+) cluster] + N(6)-octanoyl-L-lysyl-[protein] + 2 oxidized [2Fe-2S]-[ferredoxin] + 2 S-adenosyl-L-methionine + 4 H(+) = [[Fe-S] cluster scaffold protein] + N(6)-[(R)-dihydrolipoyl]-L-lysyl-[protein] + 4 Fe(3+) + 2 hydrogen sulfide + 2 5'-deoxyadenosine + 2 L-methionine + 2 reduced [2Fe-2S]-[ferredoxin]. The protein operates within protein modification; protein lipoylation via endogenous pathway; protein N(6)-(lipoyl)lysine from octanoyl-[acyl-carrier-protein]: step 2/2. In terms of biological role, catalyzes the radical-mediated insertion of two sulfur atoms into the C-6 and C-8 positions of the octanoyl moiety bound to the lipoyl domains of lipoate-dependent enzymes, thereby converting the octanoylated domains into lipoylated derivatives. This is Lipoyl synthase from Citrifermentans bemidjiense (strain ATCC BAA-1014 / DSM 16622 / JCM 12645 / Bem) (Geobacter bemidjiensis).